Reading from the N-terminus, the 160-residue chain is Ribosome maturation factor RimP (160 aa).

Belongs to the RimP family.

Its subcellular location is the cytoplasm. Required for maturation of 30S ribosomal subunits. The sequence is that of Ribosome maturation factor RimP from Syntrophus aciditrophicus (strain SB).